Consider the following 163-residue polypeptide: Odorant-binding protein 1a (163 aa).

The signal sequence occupies residues 1–16 (MAKFLLLALTFGLAHA). Disulfide bonds link cysteine 50/cysteine 54 and cysteine 69/cysteine 161.

Belongs to the calycin superfamily. Lipocalin family. In terms of assembly, may form a heterodimer with OBP1B. The N-terminus may be blocked. As to expression, expressed in nasal mucosa (at protein level). Specifically detected in septal and lateral nasal glands.

Its subcellular location is the secreted. Functionally, binds the chemical odorant 2-isobutyl-3-methoxypyrazine. This is Odorant-binding protein 1a from Mus musculus (Mouse).